Consider the following 382-residue polypeptide: N-acetyldiaminopimelate deacetylase (382 aa).

The active site involves Asp73. The active-site Proton acceptor is the Glu132.

It belongs to the peptidase M20A family. N-acetyldiaminopimelate deacetylase subfamily.

The catalysed reaction is N-acetyl-(2S,6S)-2,6-diaminopimelate + H2O = (2S,6S)-2,6-diaminopimelate + acetate. The protein operates within amino-acid biosynthesis; L-lysine biosynthesis via DAP pathway; LL-2,6-diaminopimelate from (S)-tetrahydrodipicolinate (acetylase route): step 3/3. In terms of biological role, catalyzes the conversion of N-acetyl-diaminopimelate to diaminopimelate and acetate. This Oenococcus oeni (strain ATCC BAA-331 / PSU-1) protein is N-acetyldiaminopimelate deacetylase.